A 445-amino-acid polypeptide reads, in one-letter code: QPSVFNLVKWLANLHKAPLKPDQKLAMLKRHIIPKLHYGLQTPNITGQILSEADRLIRKAVRRVLHLSVHTGSQFLYAAIRDGGLGIPQLRYHIPDVLRRRLENLSRDDSLAKAMLASAGPAAEFRQRVSVLAARGPPQAYWREQVATRPFSRGLEDCAHDAASREWLLRTPAGWTGRDFVRAAQLRTGNLPTMGLPYIPRERRRCRAGCERVESVSHILQACPVTHFERIKRHDEIVRKIAAHCRKRGWTTEVEPRIYHQDGQLFIPDLAVHLAAESILVCDVQVCWEGHRTLAKSWQNKKLVYDHPRFRKAAARRWAGSRIAISPLVLGPVGVWPRSNAETAALLQLPKTIKGSCIQSCLKWGSSIHKIFMASVWKHGPRPAHHHQPRPPEGQATANTGTLQSGRPALSHSRKKRKRQLTPTQRAPSLASPPAGATPRQLIEY.

Residues 1-114 (QPSVFNLVKW…LSRDDSLAKA (114 aa)) form the Reverse transcriptase domain. The segment at 115-445 (MLASAGPAAE…GATPRQLIEY (331 aa)) is nucleic acid-binding endonuclease. A compositionally biased stretch (basic residues) spans 380 to 389 (GPRPAHHHQP). Residues 380-445 (GPRPAHHHQP…GATPRQLIEY (66 aa)) form a disordered region. The span at 396–405 (ATANTGTLQS) shows a compositional bias: polar residues.

The catalysed reaction is DNA(n) + a 2'-deoxyribonucleoside 5'-triphosphate = DNA(n+1) + diphosphate. This chain is Retrovirus-related Pol polyprotein from type-1 retrotransposable element R2, found in Popillia japonica (Japanese beetle).